Reading from the N-terminus, the 376-residue chain is Polar flagellin A (376 aa).

2 coiled-coil regions span residues 103–128 (SNSKAERVAIQEEVTALNDELNRIAE) and 310–338 (FQNRFNHAISNLDNINENVNASNSRIKDT).

This sequence belongs to the bacterial flagellin family. As to quaternary structure, heteromer of multiple flagellin subunits including FlaA, FlaB/D, FlaC, FlaE and FlaF.

Its subcellular location is the secreted. The protein localises to the bacterial flagellum. In terms of biological role, flagellin is the subunit protein which polymerizes to form the filaments of bacterial flagella. FlaA is not essential for polar flagellar synthesis and swimming motility. Homomer of FlaA is able to form a functional filament. In Vibrio parahaemolyticus serotype O3:K6 (strain RIMD 2210633), this protein is Polar flagellin A (flaA).